Reading from the N-terminus, the 148-residue chain is Large ribosomal subunit protein uL15 (148 aa).

Basic and acidic residues predominate over residues 1 to 40; it reads MADILQMHDLKPAPGANKDRIRVGRGEGSKGKTSGRGDKG. The segment at 1 to 47 is disordered; the sequence is MADILQMHDLKPAPGANKDRIRVGRGEGSKGKTSGRGDKGTKKRYQV.

It belongs to the universal ribosomal protein uL15 family. In terms of assembly, part of the 50S ribosomal subunit.

Its function is as follows. Binds to the 23S rRNA. This chain is Large ribosomal subunit protein uL15, found in Bifidobacterium adolescentis (strain ATCC 15703 / DSM 20083 / NCTC 11814 / E194a).